The chain runs to 311 residues: Probable hydrogen peroxide-inducible genes activator (311 aa).

One can recognise an HTH lysR-type domain in the interval 8 to 65 (PTIAGLRAFVAVAEKRQFSGAATALGVSQSTLSQVLAALEAGLGTQLVERSTRRVFLT). Positions 25 to 44 (FSGAATALGVSQSTLSQVLA) form a DNA-binding region, H-T-H motif.

It belongs to the LysR transcriptional regulatory family.

Required for the induction the katG gene for catalase. Involved in the response to hydrogen peroxide. This is Probable hydrogen peroxide-inducible genes activator (oxyR) from Mycobacterium avium.